The sequence spans 381 residues: Spermidine/putrescine import ATP-binding protein PotA (381 aa).

Residues V22 to I252 enclose the ABC transporter domain. ATP is bound at residue G54–T61.

The protein belongs to the ABC transporter superfamily. Spermidine/putrescine importer (TC 3.A.1.11.1) family. In terms of assembly, the complex is composed of two ATP-binding proteins (PotA), two transmembrane proteins (PotB and PotC) and a solute-binding protein (PotD).

The protein resides in the cell inner membrane. The catalysed reaction is ATP + H2O + polyamine-[polyamine-binding protein]Side 1 = ADP + phosphate + polyamineSide 2 + [polyamine-binding protein]Side 1.. In terms of biological role, part of the ABC transporter complex PotABCD involved in spermidine/putrescine import. Responsible for energy coupling to the transport system. This chain is Spermidine/putrescine import ATP-binding protein PotA, found in Trichormus variabilis (strain ATCC 29413 / PCC 7937) (Anabaena variabilis).